We begin with the raw amino-acid sequence, 108 residues long: MDNDNDENTIRVITPNKKSGEIYGIVEKMSGASRLIVMCEDGVTRNCRIPGKMKKRMWIREGDLVIVKPWEFQDEKGDIIYRYTKTQAAYLSRNHMLPEIIDVFNEKQ.

An S1-like domain is found at Ile10 to Thr84.

It belongs to the eIF-1A family.

Seems to be required for maximal rate of protein biosynthesis. Enhances ribosome dissociation into subunits and stabilizes the binding of the initiator Met-tRNA(I) to 40 S ribosomal subunits. The chain is Translation initiation factor 1A from Picrophilus torridus (strain ATCC 700027 / DSM 9790 / JCM 10055 / NBRC 100828 / KAW 2/3).